The primary structure comprises 651 residues: Acetyl-coenzyme A synthetase (651 aa).

Residues 191–194 (RGGK), Thr-311, and Asn-335 each bind CoA. ATP-binding positions include 387 to 389 (GEP), 411 to 416 (DTWWQT), Asp-500, and Arg-515. Residue Ser-523 participates in CoA binding. Arg-526 serves as a coordination point for ATP. Positions 537, 539, and 542 each coordinate Mg(2+). Residue Arg-584 participates in CoA binding. An N6-acetyllysine modification is found at Lys-609.

Belongs to the ATP-dependent AMP-binding enzyme family. Mg(2+) serves as cofactor. Post-translationally, acetylated. Deacetylation by the SIR2-homolog deacetylase activates the enzyme.

It carries out the reaction acetate + ATP + CoA = acetyl-CoA + AMP + diphosphate. Functionally, catalyzes the conversion of acetate into acetyl-CoA (AcCoA), an essential intermediate at the junction of anabolic and catabolic pathways. AcsA undergoes a two-step reaction. In the first half reaction, AcsA combines acetate with ATP to form acetyl-adenylate (AcAMP) intermediate. In the second half reaction, it can then transfer the acetyl group from AcAMP to the sulfhydryl group of CoA, forming the product AcCoA. The sequence is that of Acetyl-coenzyme A synthetase from Stutzerimonas stutzeri (strain A1501) (Pseudomonas stutzeri).